Here is a 215-residue protein sequence, read N- to C-terminus: Proteasome subunit beta inpE (215 aa).

This sequence belongs to the peptidase T1B family.

The protein resides in the cytoplasm. Its subcellular location is the nucleus. It carries out the reaction Cleavage of peptide bonds with very broad specificity.. Proteasome subunit beta type-6; part of the inp gene cluster that mediates the biosynthesis of fellutamide B, a mycotoxin that acts as a proteasome inhibitor. In the first step of fellutabmide B biosynthesis inpC activates 3-hydroxydodecanoic acid to generate 3-hydroxydodecanoyl-AMP that is then loaded onto the T0 domain of inpB. The 3-hydroxydodecanoyl-S-phosphopantetheinyl-T0 is sequentially extended with L-Asn and L-Gln by the two CAT modules of inpB. The linear lipodipeptide from inpB is then transferred onto inpA for the addition of the third amino acid, L-Leu. Reductive releasing of the lipotripeptide by the TE domain of inpA produces (2S)-fellutamide B. InpF might be involved in the release and transfer of the lipodipeptide from inpB to inpA. The inp cluster-encoded proteasome subunit inpE confers resistance to internally produced fellutamides. The MFS efflux transporter inpD may contribute to fellutamide resistance as well. The chain is Proteasome subunit beta inpE (inpE) from Emericella nidulans (strain FGSC A4 / ATCC 38163 / CBS 112.46 / NRRL 194 / M139) (Aspergillus nidulans).